Here is a 60-residue protein sequence, read N- to C-terminus: Large ribosomal subunit protein bL32 (60 aa).

The protein belongs to the bacterial ribosomal protein bL32 family.

The polypeptide is Large ribosomal subunit protein bL32 (Borrelia duttonii (strain Ly)).